We begin with the raw amino-acid sequence, 286 residues long: 2-hydroxy-6-oxononadienedioate/2-hydroxy-6-oxononatrienedioate hydrolase 2 (286 aa).

Catalysis depends on His266, which acts as the Proton acceptor.

Belongs to the AB hydrolase superfamily. MhpC family. In terms of assembly, homodimer.

It carries out the reaction (2Z,4E)-2-hydroxy-6-oxonona-2,4-dienedioate + H2O = (2Z)-2-hydroxypenta-2,4-dienoate + succinate + H(+). The enzyme catalyses (2Z,4E,7E)-2-hydroxy-6-oxonona-2,4,7-trienedioate + H2O = (2Z)-2-hydroxypenta-2,4-dienoate + fumarate + H(+). It participates in aromatic compound metabolism; 3-phenylpropanoate degradation. Functionally, catalyzes the cleavage of the C5-C6 bond of 2-hydroxy-6-oxononadienedioate and 2-hydroxy-6-oxononatrienedioate, a dienol ring fission product of the bacterial meta-cleavage pathway for degradation of phenylpropionic acid. The chain is 2-hydroxy-6-oxononadienedioate/2-hydroxy-6-oxononatrienedioate hydrolase 2 from Pseudomonas putida (Arthrobacter siderocapsulatus).